Reading from the N-terminus, the 445-residue chain is Histidine--tRNA ligase (445 aa).

Belongs to the class-II aminoacyl-tRNA synthetase family. In terms of assembly, homodimer.

The protein resides in the cytoplasm. It carries out the reaction tRNA(His) + L-histidine + ATP = L-histidyl-tRNA(His) + AMP + diphosphate + H(+). This chain is Histidine--tRNA ligase, found in Mycoplasma mobile (strain ATCC 43663 / 163K / NCTC 11711) (Mesomycoplasma mobile).